We begin with the raw amino-acid sequence, 298 residues long: N-acetylmuramic acid 6-phosphate etherase (298 aa).

One can recognise an SIS domain in the interval 57–220; the sequence is IAAAFGKGGR…STGAMIRTGK (164 aa). Catalysis depends on Glu-85, which acts as the Proton donor. Glu-116 is an active-site residue.

It belongs to the GCKR-like family. MurNAc-6-P etherase subfamily. As to quaternary structure, homodimer.

The catalysed reaction is N-acetyl-D-muramate 6-phosphate + H2O = N-acetyl-D-glucosamine 6-phosphate + (R)-lactate. Its pathway is amino-sugar metabolism; 1,6-anhydro-N-acetylmuramate degradation. It participates in amino-sugar metabolism; N-acetylmuramate degradation. The protein operates within cell wall biogenesis; peptidoglycan recycling. Functionally, specifically catalyzes the cleavage of the D-lactyl ether substituent of MurNAc 6-phosphate, producing GlcNAc 6-phosphate and D-lactate. Together with AnmK, is also required for the utilization of anhydro-N-acetylmuramic acid (anhMurNAc) either imported from the medium or derived from its own cell wall murein, and thus plays a role in cell wall recycling. This is N-acetylmuramic acid 6-phosphate etherase from Aeromonas hydrophila subsp. hydrophila (strain ATCC 7966 / DSM 30187 / BCRC 13018 / CCUG 14551 / JCM 1027 / KCTC 2358 / NCIMB 9240 / NCTC 8049).